Consider the following 120-residue polypeptide: NAD(P)H-quinone oxidoreductase subunit 3, chloroplastic (120 aa).

The next 3 membrane-spanning stretches (helical) occupy residues 9-29 (IFWV…LISG), 64-84 (MFAL…PWAM), and 88-108 (VLGV…IVGL).

It belongs to the complex I subunit 3 family. In terms of assembly, NDH is composed of at least 16 different subunits, 5 of which are encoded in the nucleus.

It is found in the plastid. It localises to the chloroplast thylakoid membrane. It catalyses the reaction a plastoquinone + NADH + (n+1) H(+)(in) = a plastoquinol + NAD(+) + n H(+)(out). It carries out the reaction a plastoquinone + NADPH + (n+1) H(+)(in) = a plastoquinol + NADP(+) + n H(+)(out). In terms of biological role, NDH shuttles electrons from NAD(P)H:plastoquinone, via FMN and iron-sulfur (Fe-S) centers, to quinones in the photosynthetic chain and possibly in a chloroplast respiratory chain. The immediate electron acceptor for the enzyme in this species is believed to be plastoquinone. Couples the redox reaction to proton translocation, and thus conserves the redox energy in a proton gradient. The protein is NAD(P)H-quinone oxidoreductase subunit 3, chloroplastic of Cucumis sativus (Cucumber).